Here is a 154-residue protein sequence, read N- to C-terminus: Interleukin-2 (154 aa).

The first 20 residues, 1-20, serve as a signal peptide directing secretion; it reads MYRMQLLSCIALSLALVTNS. An O-linked (GalNAc...) threonine glycan is attached at Thr-23. Cysteines 78 and 126 form a disulfide.

It belongs to the IL-2 family.

Its subcellular location is the secreted. Cytokine produced by activated CD4-positive helper T-cells and to a lesser extend activated CD8-positive T-cells and natural killer (NK) cells that plays pivotal roles in the immune response and tolerance. Binds to a receptor complex composed of either the high-affinity trimeric IL-2R (IL2RA/CD25, IL2RB/CD122 and IL2RG/CD132) or the low-affinity dimeric IL-2R (IL2RB and IL2RG). Interaction with the receptor leads to oligomerization and conformation changes in the IL-2R subunits resulting in downstream signaling starting with phosphorylation of JAK1 and JAK3. In turn, JAK1 and JAK3 phosphorylate the receptor to form a docking site leading to the phosphorylation of several substrates including STAT5. This process leads to activation of several pathways including STAT, phosphoinositide-3-kinase/PI3K and mitogen-activated protein kinase/MAPK pathways. Functions as a T-cell growth factor and can increase NK-cell cytolytic activity as well. Promotes strong proliferation of activated B-cells and subsequently immunoglobulin production. Plays a pivotal role in regulating the adaptive immune system by controlling the survival and proliferation of regulatory T-cells, which are required for the maintenance of immune tolerance. Moreover, participates in the differentiation and homeostasis of effector T-cell subsets, including Th1, Th2, Th17 as well as memory CD8-positive T-cells. The protein is Interleukin-2 (IL2) of Cercocebus atys (Sooty mangabey).